A 507-amino-acid polypeptide reads, in one-letter code: Methionine--tRNA ligase (507 aa).

The 'HIGH' region signature appears at 12-22 (YYVNDVSHIGH). Residues 295–299 (KISKS) carry the 'KMSKS' region motif. Lys-298 is an ATP binding site.

The protein belongs to the class-I aminoacyl-tRNA synthetase family. MetG type 2B subfamily. As to quaternary structure, monomer.

The protein resides in the cytoplasm. The enzyme catalyses tRNA(Met) + L-methionine + ATP = L-methionyl-tRNA(Met) + AMP + diphosphate. Is required not only for elongation of protein synthesis but also for the initiation of all mRNA translation through initiator tRNA(fMet) aminoacylation. The polypeptide is Methionine--tRNA ligase (Rickettsia typhi (strain ATCC VR-144 / Wilmington)).